Consider the following 420-residue polypeptide: Glucose-1-phosphate adenylyltransferase (420 aa).

Alpha-D-glucose 1-phosphate-binding positions include Tyr107, Gly172, 187 to 188 (EK), and Ser205.

It belongs to the bacterial/plant glucose-1-phosphate adenylyltransferase family. Homotetramer.

It carries out the reaction alpha-D-glucose 1-phosphate + ATP + H(+) = ADP-alpha-D-glucose + diphosphate. It functions in the pathway glycan biosynthesis; glycogen biosynthesis. Its function is as follows. Involved in the biosynthesis of ADP-glucose, a building block required for the elongation reactions to produce glycogen. Catalyzes the reaction between ATP and alpha-D-glucose 1-phosphate (G1P) to produce pyrophosphate and ADP-Glc. The protein is Glucose-1-phosphate adenylyltransferase of Rhizobium rhizogenes (strain K84 / ATCC BAA-868) (Agrobacterium radiobacter).